Consider the following 331-residue polypeptide: Ribosomal RNA small subunit methyltransferase C (331 aa).

This sequence belongs to the methyltransferase superfamily. RsmC family. Monomer.

The protein localises to the cytoplasm. It carries out the reaction guanosine(1207) in 16S rRNA + S-adenosyl-L-methionine = N(2)-methylguanosine(1207) in 16S rRNA + S-adenosyl-L-homocysteine + H(+). Its function is as follows. Specifically methylates the guanine in position 1207 of 16S rRNA in the 30S particle. The chain is Ribosomal RNA small subunit methyltransferase C from Pseudomonas putida (strain W619).